A 207-amino-acid chain; its full sequence is Large ribosomal subunit protein uL4 (207 aa).

Residues 45–78 (RQGTHAVKNRSAVRGGGRKPWRQKGTGRARQGSI) form a disordered region. Positions 60-71 (GGRKPWRQKGTG) are enriched in basic residues.

The protein belongs to the universal ribosomal protein uL4 family. As to quaternary structure, part of the 50S ribosomal subunit.

In terms of biological role, one of the primary rRNA binding proteins, this protein initially binds near the 5'-end of the 23S rRNA. It is important during the early stages of 50S assembly. It makes multiple contacts with different domains of the 23S rRNA in the assembled 50S subunit and ribosome. Functionally, forms part of the polypeptide exit tunnel. This is Large ribosomal subunit protein uL4 from Pediococcus pentosaceus (strain ATCC 25745 / CCUG 21536 / LMG 10740 / 183-1w).